The sequence spans 677 residues: Glutamine--fructose-6-phosphate aminotransferase [isomerizing] 1 (677 aa).

Residue C2 is the Nucleophile of the active site. Positions 2–269 constitute a Glutamine amidotransferase type-2 domain; the sequence is CGIFAYLNFH…DGEVVNLKDG (268 aa). SIS domains lie at 353–492 and 524–667; these read HLKT…DTIS and LAQL…VDQP. Substrate contacts are provided by residues 370–371, 415–417, T420, and H571; these read TS and SQS.

As to quaternary structure, homotetramer, may also exist as homodimers. In terms of tissue distribution, highly expressed in flowers specifically in mature anthers, mature pollen grains and pollen tubes. Barely observed in roots, leaves and stems.

It carries out the reaction D-fructose 6-phosphate + L-glutamine = D-glucosamine 6-phosphate + L-glutamate. It participates in nucleotide-sugar biosynthesis; UDP-N-acetyl-alpha-D-glucosamine biosynthesis; alpha-D-glucosamine 6-phosphate from D-fructose 6-phosphate: step 1/1. Functionally, controls the flux of glucose into the hexosamine biosynthetic pathway (HBP) leading to glucosamine (GlcN) content homeostasis. Involved in regulating the availability of precursors for N- and O-linked glycosylation of proteins. Required during pollen maturation and pollen tube formation by triggering polar deposition of pectin and callose in the pollen cell wall. Promotes tolerance to tunicamycin (Tm), an inhibitor of proteins N-glycosylation in endoplasmic reticulum (ER). The sequence is that of Glutamine--fructose-6-phosphate aminotransferase [isomerizing] 1 from Arabidopsis thaliana (Mouse-ear cress).